We begin with the raw amino-acid sequence, 654 residues long: MSSSNVEVFIPMSQENTNGFPTTTSNDRKAFTEGAVLSFHNICYRVKVKSGFLPGRKPVEKEILSNINGIMKPGLNAILGPTGGGKSSLLDVLAARKDPSGLSGDVLINGALRPTNFKCNSGYVVQDDVVMGTLTVRENLQFSAALRLPTTMTNHEKNERINRVIQELGLDKVADSKVGTQFIRGVSGGERKRTSIGMELITDPSILFLDEPTTGLDSSTANAVLLLLKRMSKQGRTIIFSIHQPRYSIFKLFDSLTLLASGRLMFHGPAQEALGYFESAGYHCEAYNNPADFFLDIINGDSTAVALNREEDFKATEIIEPSKRDKPLVEKLAEIYVDSSFYKETKAELHQLSGGEKKKITVFKEISYTTSFCHQLRWVSKRSFKNLLGNPQASIAQIIVTVILGLVIGAIYFGLNNDSTGIQNRAGVLFFLTTNQCFSSVSAVELFVVEKKLFIHEYISGYYRVSSYFFGKLLSDLLPMRMLPSIIFTCIVYFMLGLKPTADAFFIMMFTLMMVAYSASSMALAIAAGQSVVSVATLLMTICFVFMMIFSGLLVNLTTIASWLSWLQYFSIPRYGFTALQHNEFLGQNFCPGLNATVNNTCNYATCTGEEYLAKQGIDLSPWGLWKNHVALACMIVIFLTIAYLKLLFLKKYS.

At 1 to 394 (MSSSNVEVFI…KNLLGNPQAS (394 aa)) the chain is on the cytoplasmic side. The ABC transporter domain maps to 37-286 (LSFHNICYRV…FESAGYHCEA (250 aa)). ATP is bound by residues 80–87 (GPTGGGKS), 184–190 (RGVSGGE), glutamate 211, and histidine 243. In terms of domain architecture, ABC transmembrane type-2 spans 388–650 (LGNPQASIAQ…TIAYLKLLFL (263 aa)). The chain crosses the membrane as a helical span at residues 395–415 (IAQIIVTVILGLVIGAIYFGL). The Extracellular segment spans residues 416–427 (NNDSTGIQNRAG). Asparagine 417 carries an N-linked (GlcNAc...) asparagine glycan. Residues 428 to 448 (VLFFLTTNQCFSSVSAVELFV) form a helical membrane-spanning segment. The Cytoplasmic segment spans residues 449 to 476 (VEKKLFIHEYISGYYRVSSYFFGKLLSD). Residues 477-497 (LLPMRMLPSIIFTCIVYFMLG) form a helical membrane-spanning segment. At 498–505 (LKPTADAF) the chain is on the extracellular side. A helical transmembrane segment spans residues 506 to 526 (FIMMFTLMMVAYSASSMALAI). Residues 527–534 (AAGQSVVS) are Cytoplasmic-facing. A helical transmembrane segment spans residues 535–555 (VATLLMTICFVFMMIFSGLLV). Asparagine 556, asparagine 595, and asparagine 599 each carry an N-linked (GlcNAc...) asparagine glycan. Residues 556-629 (NLTTIASWLS…LSPWGLWKNH (74 aa)) lie on the Extracellular side of the membrane. The cysteines at positions 591 and 607 are disulfide-linked. Residues 630–650 (VALACMIVIFLTIAYLKLLFL) form a helical membrane-spanning segment. Residues 651–654 (KKYS) are Cytoplasmic-facing.

The protein belongs to the ABC transporter superfamily. ABCG family. Eye pigment precursor importer (TC 3.A.1.204) subfamily. Homodimer; disulfide-linked. The minimal functional unit is a homodimer, but the major oligomeric form in plasma membrane is a homotetramer with possibility of higher order oligomerization up to homododecamers. N-glycosylated. Glycosylation-deficient ABCG2 is normally expressed and functional. Post-translationally, phosphorylated. Phosphorylation may regulate the localization to the plasma membrane, the homooligomerization and therefore, the activity of the transporter.

The protein resides in the cell membrane. It is found in the apical cell membrane. Its subcellular location is the mitochondrion membrane. The enzyme catalyses ATP + H2O + xenobioticSide 1 = ADP + phosphate + xenobioticSide 2.. The catalysed reaction is urate(in) + ATP + H2O = urate(out) + ADP + phosphate + H(+). It carries out the reaction indoxyl sulfate(in) + ATP + H2O = indoxyl sulfate(out) + ADP + phosphate + H(+). It catalyses the reaction sphing-4-enine 1-phosphate(in) + ATP + H2O = sphing-4-enine 1-phosphate(out) + ADP + phosphate + H(+). The enzyme catalyses estrone 3-sulfate(in) + ATP + H2O = estrone 3-sulfate(out) + ADP + phosphate + H(+). The catalysed reaction is dehydroepiandrosterone 3-sulfate(in) + ATP + H2O = dehydroepiandrosterone 3-sulfate(out) + ADP + phosphate + H(+). It carries out the reaction 4-methylumbelliferone sulfate(in) + ATP + H2O = 4-methylumbelliferone sulfate(out) + ADP + phosphate + H(+). It catalyses the reaction 5,7-dimethyl-2-methylamino-4-(3-pyridylmethyl)-1,3-benzothiazol-6-yl beta-D-glucuronate(in) + ATP + H2O = 5,7-dimethyl-2-methylamino-4-(3-pyridylmethyl)-1,3-benzothiazol-6-yl beta-D-glucuronate(out) + ADP + phosphate + H(+). The enzyme catalyses 4-methylumbelliferone beta-D-glucuronate(in) + ATP + H2O = 4-methylumbelliferone beta-D-glucuronate(out) + ADP + phosphate + H(+). The catalysed reaction is 5,7-dimethyl-2-methylamino-4-(3-pyridylmethyl)-1,3-benzothiazol-6-yl sulfate(in) + ATP + H2O = 5,7-dimethyl-2-methylamino-4-(3-pyridylmethyl)-1,3-benzothiazol-6-yl sulfate(out) + ADP + phosphate + H(+). It carries out the reaction 17beta-estradiol 17-O-(beta-D-glucuronate)(in) + ATP + H2O = 17beta-estradiol 17-O-(beta-D-glucuronate)(out) + ADP + phosphate + H(+). It catalyses the reaction methotrexate(in) + ATP + H2O = methotrexate(out) + ADP + phosphate + H(+). The enzyme catalyses riboflavin(in) + ATP + H2O = riboflavin(out) + ADP + phosphate + H(+). The catalysed reaction is pheophorbide a(in) + ATP + H2O = pheophorbide a(out) + ADP + phosphate + H(+). It carries out the reaction itaconate(in) + ATP + H2O = itaconate(out) + ADP + phosphate + H(+). In terms of biological role, broad substrate specificity ATP-dependent transporter of the ATP-binding cassette (ABC) family that actively extrudes a wide variety of physiological compounds, dietary toxins and xenobiotics from cells. Involved in porphyrin homeostasis, mediating the export of protoporphyrin IX (PPIX) from both mitochondria to cytosol and cytosol to extracellular space, it also functions in the cellular export of heme. Also mediates the efflux of sphingosine-1-P from cells. Acts as a urate exporter functioning in both renal and extrarenal urate excretion. In kidney, it also functions as a physiological exporter of the uremic toxin indoxyl sulfate. Also involved in the excretion of steroids like estrone 3-sulfate/E1S, 3beta-sulfooxy-androst-5-en-17-one/DHEAS, and other sulfate conjugates. Mediates the secretion of the riboflavin and biotin vitamins into milk. Extrudes pheophorbide a, a phototoxic porphyrin catabolite of chlorophyll, reducing its bioavailability. Plays an important role in the exclusion of xenobiotics from the brain. It confers to cells a resistance to multiple drugs and other xenobiotics including mitoxantrone, pheophorbide, camptothecin, methotrexate, azidothymidine, and the anthracyclines daunorubicin and doxorubicin, through the control of their efflux. In placenta, it limits the penetration of drugs from the maternal plasma into the fetus. May play a role in early stem cell self-renewal by blocking differentiation. In inflammatory macrophages, exports itaconate from the cytosol to the extracellular compartment and limits the activation of TFEB-dependent lysosome biogenesis involved in antibacterial innate immune response. This is Broad substrate specificity ATP-binding cassette transporter ABCG2 (ABCG2) from Macaca mulatta (Rhesus macaque).